Here is a 63-residue protein sequence, read N- to C-terminus: MVGGRVAHPVLKGPSEVKELIIGSVLGLAAGGLWKMHHWNEQRKTRAFYDLLEKGEISVVVQE.

A helical transmembrane segment spans residues 15-34 (SEVKELIIGSVLGLAAGGLW).

It belongs to the cytochrome c oxidase subunit 5C family.

Its subcellular location is the mitochondrion inner membrane. Its function is as follows. This protein is one of the nuclear-coded polypeptide chains of cytochrome c oxidase, the terminal oxidase in mitochondrial electron transport. This Helianthus annuus (Common sunflower) protein is Cytochrome c oxidase subunit 5C-1 (COX5C1).